The sequence spans 68 residues: Serine rich endogenous peptide 22 (68 aa).

Residues 1 to 25 (MNKALVWLITLLFLIFSATPNRVLA) form the signal peptide. The short motif at 50-64 (KIGVGASNSGHSPGA) is the SCOOP motif element. A SxS motif essential for MIK2 binding motif is present at residues 56-58 (SNS).

It belongs to the serine rich endogenous peptide (SCOOP) phytocytokine family. Interacts with MIK2 (via extracellular leucine-rich repeat domain); this interaction triggers the formation of complex between MIK2 and the BAK1/SERK3 and SERK4 coreceptors, and subsequent BAK1 activation by phosphorylation.

The protein resides in the cell membrane. It is found in the secreted. Its subcellular location is the extracellular space. The protein localises to the apoplast. Brassicaceae-specific phytocytokine (plant endogenous peptide released into the apoplast) perceived by MIK2 in a BAK1/SERK3 and SERK4 coreceptors-dependent manner, that modulates various physiological and antimicrobial processes including growth prevention and reactive oxygen species (ROS) response regulation. The polypeptide is Serine rich endogenous peptide 22 (Arabidopsis thaliana (Mouse-ear cress)).